We begin with the raw amino-acid sequence, 221 residues long: MAKNKFNQSWLHDHINDPYVKLAQREGYRARAAYKLKEIDEQDKLIKPGQVIVDLGAAPGSWSQYVRNKLAASPRAKDGRIDGAIVAIDILPMEAIADVTFIQGDFREDEVFRQLEEIVLEVSGGGKVDLVLSDMAPNLSGVASADAARMEHIAELAVEFAMAHLKPEGALLIKCFHGSGYSQIVEMFKRHFKIVAPRKPKASRDKSSETFLLGRQLKHPG.

Positions 60, 62, 89, 105, and 134 each coordinate S-adenosyl-L-methionine. Catalysis depends on Lys174, which acts as the Proton acceptor. A disordered region spans residues Lys199 to Gly221.

This sequence belongs to the class I-like SAM-binding methyltransferase superfamily. RNA methyltransferase RlmE family.

Its subcellular location is the cytoplasm. The enzyme catalyses uridine(2552) in 23S rRNA + S-adenosyl-L-methionine = 2'-O-methyluridine(2552) in 23S rRNA + S-adenosyl-L-homocysteine + H(+). In terms of biological role, specifically methylates the uridine in position 2552 of 23S rRNA at the 2'-O position of the ribose in the fully assembled 50S ribosomal subunit. The sequence is that of Ribosomal RNA large subunit methyltransferase E from Ralstonia pickettii (strain 12J).